The chain runs to 252 residues: Ubiquinone/menaquinone biosynthesis C-methyltransferase UbiE (252 aa).

Residues Thr71, Asp100, Asp124–Ala125, and Ser141 contribute to the S-adenosyl-L-methionine site.

This sequence belongs to the class I-like SAM-binding methyltransferase superfamily. MenG/UbiE family.

It carries out the reaction a 2-demethylmenaquinol + S-adenosyl-L-methionine = a menaquinol + S-adenosyl-L-homocysteine + H(+). It catalyses the reaction a 2-methoxy-6-(all-trans-polyprenyl)benzene-1,4-diol + S-adenosyl-L-methionine = a 5-methoxy-2-methyl-3-(all-trans-polyprenyl)benzene-1,4-diol + S-adenosyl-L-homocysteine + H(+). It functions in the pathway quinol/quinone metabolism; menaquinone biosynthesis; menaquinol from 1,4-dihydroxy-2-naphthoate: step 2/2. Its pathway is cofactor biosynthesis; ubiquinone biosynthesis. Its function is as follows. Methyltransferase required for the conversion of demethylmenaquinol (DMKH2) to menaquinol (MKH2) and the conversion of 2-polyprenyl-6-methoxy-1,4-benzoquinol (DDMQH2) to 2-polyprenyl-3-methyl-6-methoxy-1,4-benzoquinol (DMQH2). The polypeptide is Ubiquinone/menaquinone biosynthesis C-methyltransferase UbiE (Caulobacter vibrioides (strain ATCC 19089 / CIP 103742 / CB 15) (Caulobacter crescentus)).